Reading from the N-terminus, the 418-residue chain is Tyrosine--tRNA ligase (418 aa).

Residue tyrosine 39 participates in L-tyrosine binding. Positions 44 to 53 match the 'HIGH' region motif; sequence CTADSLHVGS. Positions 176 and 180 each coordinate L-tyrosine. The short motif at 236–240 is the 'KMSKS' region element; that stretch reads KMGKT. Lysine 239 contributes to the ATP binding site. One can recognise an S4 RNA-binding domain in the interval 350–416; sequence LPLAEMMRAT…KKRHALIRVL (67 aa).

This sequence belongs to the class-I aminoacyl-tRNA synthetase family. TyrS type 1 subfamily. In terms of assembly, homodimer.

Its subcellular location is the cytoplasm. The enzyme catalyses tRNA(Tyr) + L-tyrosine + ATP = L-tyrosyl-tRNA(Tyr) + AMP + diphosphate + H(+). Its function is as follows. Catalyzes the attachment of tyrosine to tRNA(Tyr) in a two-step reaction: tyrosine is first activated by ATP to form Tyr-AMP and then transferred to the acceptor end of tRNA(Tyr). The sequence is that of Tyrosine--tRNA ligase from Rhodospirillum rubrum (strain ATCC 11170 / ATH 1.1.1 / DSM 467 / LMG 4362 / NCIMB 8255 / S1).